A 404-amino-acid polypeptide reads, in one-letter code: Cysteine desulfurase IscS (404 aa).

Pyridoxal 5'-phosphate-binding positions include 75-76 (AT), Asn-155, Gln-183, and 203-205 (SAH). Lys-206 is subject to N6-(pyridoxal phosphate)lysine. Residue Thr-243 participates in pyridoxal 5'-phosphate binding. The Cysteine persulfide intermediate role is filled by Cys-328. Cys-328 is a binding site for [2Fe-2S] cluster.

It belongs to the class-V pyridoxal-phosphate-dependent aminotransferase family. NifS/IscS subfamily. As to quaternary structure, homodimer. Forms a heterotetramer with IscU, interacts with other sulfur acceptors. It depends on pyridoxal 5'-phosphate as a cofactor.

It is found in the cytoplasm. The enzyme catalyses (sulfur carrier)-H + L-cysteine = (sulfur carrier)-SH + L-alanine. It functions in the pathway cofactor biosynthesis; iron-sulfur cluster biosynthesis. Master enzyme that delivers sulfur to a number of partners involved in Fe-S cluster assembly, tRNA modification or cofactor biosynthesis. Catalyzes the removal of elemental sulfur atoms from cysteine to produce alanine. Functions as a sulfur delivery protein for Fe-S cluster synthesis onto IscU, an Fe-S scaffold assembly protein, as well as other S acceptor proteins. The polypeptide is Cysteine desulfurase IscS (Tolumonas auensis (strain DSM 9187 / NBRC 110442 / TA 4)).